The chain runs to 250 residues: Thiamine thiazole synthase (250 aa).

Residues serine 36, 55–56 (EE), glycine 63, valine 126, and 152–154 (HVD) each bind NAD(+). Residues aspartate 154 and histidine 169 each coordinate Fe cation. NAD(+) is bound at residue methionine 216. Arginine 226 contributes to the glycine binding site.

It belongs to the THI4 family. Homooctamer; tetramer of dimers. Fe(2+) is required as a cofactor.

It carries out the reaction hydrogen sulfide + glycine + NAD(+) = ADP-5-ethyl-4-methylthiazole-2-carboxylate + nicotinamide + 3 H2O + H(+). The protein operates within cofactor biosynthesis; thiamine diphosphate biosynthesis. In terms of biological role, involved in the biosynthesis of the thiazole moiety of thiamine. Catalyzes the conversion of NAD and glycine to adenosine diphosphate 5-(2-hydroxyethyl)-4-methylthiazole-2-carboxylate (ADT), an adenylated thiazole intermediate, using free sulfide as a source of sulfur. The sequence is that of Thiamine thiazole synthase from Thermotoga maritima (strain ATCC 43589 / DSM 3109 / JCM 10099 / NBRC 100826 / MSB8).